Here is a 508-residue protein sequence, read N- to C-terminus: Serine/threonine-protein kinase VRK2 (508 aa).

In terms of domain architecture, Protein kinase spans 29-319; the sequence is WVLGKKIGSG…KKILNPHGIP (291 aa). ATP contacts are provided by residues 35–43 and Lys61; that span reads IGSGGFGLI. Asp166 serves as the catalytic Proton acceptor. Residue Thr336 is modified to Phosphothreonine. Positions 397–508 are interaction with MAP3K7; the sequence is TRRRQKYQES…MLVFLALFFL (112 aa). The residue at position 406 (Ser406) is a Phosphoserine. A helical; Anchor for type IV membrane protein transmembrane segment spans residues 487-507; that stretch reads VYYYRIIIPVLLMLVFLALFF.

The protein belongs to the protein kinase superfamily. CK1 Ser/Thr protein kinase family. VRK subfamily. Isoform 1 interacts with MAP3K7, MAP2K7, MAP2K1 and KSR1. Isoform 1 and isoform 2 interact with RAN and MAPK8IP1. In terms of assembly, (Microbial infection) Isoform 1 interacts with Epstein-Barr virus BHRF1; this interaction is involved in protecting cells from apoptosis. As to quaternary structure, (Microbial infection) Isoform 1 interacts with vaccinia protein B12. In terms of processing, autophosphorylated. As to expression, isoform 1 and isoform 2 are expressed in various tumor cell lines. Expression of isoform 1 inversely correlates with ERBB2 in breast carcinomas (at protein level). Widely expressed. Highly expressed in fetal liver, skeletal muscle, pancreas, heart, peripheral blood leukocytes and testis.

The protein localises to the cytoplasm. The protein resides in the endoplasmic reticulum membrane. Its subcellular location is the mitochondrion membrane. It is found in the nucleus envelope. It localises to the nucleus. The catalysed reaction is L-seryl-[protein] + ATP = O-phospho-L-seryl-[protein] + ADP + H(+). It carries out the reaction L-threonyl-[protein] + ATP = O-phospho-L-threonyl-[protein] + ADP + H(+). RAN inhibits its autophosphorylation and its ability to phosphorylate histone H3. Serine/threonine kinase that regulates several signal transduction pathways. Isoform 1 modulates the stress response to hypoxia and cytokines, such as interleukin-1 beta (IL1B) and this is dependent on its interaction with MAPK8IP1, which assembles mitogen-activated protein kinase (MAPK) complexes. Inhibition of signal transmission mediated by the assembly of MAPK8IP1-MAPK complexes reduces JNK phosphorylation and JUN-dependent transcription. Phosphorylates 'Thr-18' of p53/TP53, histone H3, and may also phosphorylate MAPK8IP1. Phosphorylates BANF1 and disrupts its ability to bind DNA and reduces its binding to LEM domain-containing proteins. Down-regulates the transactivation of transcription induced by ERBB2, HRAS, BRAF, and MEK1. Blocks the phosphorylation of ERK in response to ERBB2 and HRAS. Can also phosphorylate the following substrates that are commonly used to establish in vitro kinase activity: casein, MBP and histone H2B, but it is not sure that this is physiologically relevant. Functionally, phosphorylates 'Thr-18' of p53/TP53, as well as histone H3. Reduces p53/TP53 ubiquitination by MDM2, promotes p53/TP53 acetylation by EP300 and thereby increases p53/TP53 stability and activity. This Homo sapiens (Human) protein is Serine/threonine-protein kinase VRK2 (VRK2).